Consider the following 208-residue polypeptide: Outer-membrane lipoprotein carrier protein (208 aa).

The signal sequence occupies residues 1–21 (MRLIRTLFVAALAMGASLAHA).

Belongs to the LolA family. As to quaternary structure, monomer.

The protein resides in the periplasm. Its function is as follows. Participates in the translocation of lipoproteins from the inner membrane to the outer membrane. Only forms a complex with a lipoprotein if the residue after the N-terminal Cys is not an aspartate (The Asp acts as a targeting signal to indicate that the lipoprotein should stay in the inner membrane). The protein is Outer-membrane lipoprotein carrier protein of Pseudomonas aeruginosa (strain UCBPP-PA14).